Reading from the N-terminus, the 109-residue chain is Large ribosomal subunit protein uL24 (109 aa).

The protein belongs to the universal ribosomal protein uL24 family. In terms of assembly, part of the 50S ribosomal subunit.

One of two assembly initiator proteins, it binds directly to the 5'-end of the 23S rRNA, where it nucleates assembly of the 50S subunit. In terms of biological role, one of the proteins that surrounds the polypeptide exit tunnel on the outside of the subunit. This is Large ribosomal subunit protein uL24 from Hamiltonella defensa subsp. Acyrthosiphon pisum (strain 5AT).